A 295-amino-acid chain; its full sequence is MAITAQMVKELREKTGAGMMDCKKALTETNGDMEKAIDFLREKGIAKAAKKADRIAAEGLTFIETNGNDALILELNSETDFVAKNEGFQTLIKELAAHLLTNKPANVEEAMAQTMENGKKVEEHINEAIAKIGEKLTLRRFEIVSKTDADAFGAYLHMGGRIGVLTVLEGSTDEAAAKDVAMHIAAVNPKYIDRDAVTAEEVEHERQVLTQQALNEGKPEKIVAKMVEGRLGKFFEEICLLDQAFVKNPDMKVRQFVESKGGTLKGFVRYAVGEGIEKREDNFAEEVMNQVKGSN.

Residues 79-82 (TDFV) form an involved in Mg(2+) ion dislocation from EF-Tu region.

This sequence belongs to the EF-Ts family.

The protein resides in the cytoplasm. Functionally, associates with the EF-Tu.GDP complex and induces the exchange of GDP to GTP. It remains bound to the aminoacyl-tRNA.EF-Tu.GTP complex up to the GTP hydrolysis stage on the ribosome. This Bacillus cereus (strain B4264) protein is Elongation factor Ts.